The primary structure comprises 358 residues: Mannonate dehydratase (358 aa).

It belongs to the mannonate dehydratase family. Fe(2+) serves as cofactor. Requires Mn(2+) as cofactor.

It carries out the reaction D-mannonate = 2-dehydro-3-deoxy-D-gluconate + H2O. The protein operates within carbohydrate metabolism; pentose and glucuronate interconversion. Catalyzes the dehydration of D-mannonate. The polypeptide is Mannonate dehydratase (Shouchella clausii (strain KSM-K16) (Alkalihalobacillus clausii)).